Consider the following 265-residue polypeptide: Orotidine 5'-phosphate decarboxylase (265 aa).

Substrate-binding positions include D38, 60–62, 91–100, Y213, and R232; these read KTH and DRKFADIGNT. The active-site Proton donor is the K93.

The protein belongs to the OMP decarboxylase family.

The enzyme catalyses orotidine 5'-phosphate + H(+) = UMP + CO2. It participates in pyrimidine metabolism; UMP biosynthesis via de novo pathway; UMP from orotate: step 2/2. This is Orotidine 5'-phosphate decarboxylase (pyrG) from Rhizopus oryzae (Mucormycosis agent).